A 789-amino-acid chain; its full sequence is Potassium transporter 4 (789 aa).

The Cytoplasmic segment spans residues 1-32 (MAPAESGVSPRRNPSQLSWMNLSSNLILAYQS). Ser-9 bears the Phosphoserine mark. A helical membrane pass occupies residues 33–53 (FGVVYGDLSTSPLYVFPSTFI). Over 54 to 68 (GKLHKHHNEDAVFGA) the chain is Extracellular. The chain crosses the membrane as a helical span at residues 69-89 (FSLIFWTLTLIPLLKYLLVLL). Topologically, residues 90-154 (SADDNGEGGT…FLEKHKRLRT (65 aa)) are cytoplasmic. The helical transmembrane segment at 155–175 (ALLLVVLFGAAMVIGDGVLTP) threads the bilayer. At 176–195 (ALSVLSSLSGLQATEKNVTD) the chain is on the extracellular side. Residues 196–216 (GELLVLACVILVGLFALQHCG) traverse the membrane as a helical segment. Residues 217-219 (THR) are Cytoplasmic-facing. Residues 220–240 (VAFMFAPIVIIWLISIFFIGL) traverse the membrane as a helical segment. The Extracellular segment spans residues 241–270 (YNIIRWNPKIIHAVSPLYIIKFFRVTGQDG). The helical transmembrane segment at 271–291 (WISLGGVLLSVTGTEAMFANL) threads the bilayer. At 292–300 (GHFTSVSIR) the chain is on the cytoplasmic side. Residues 301–321 (VAFAVVVYPCLVVQYMGQAAF) form a helical membrane-spanning segment. Residues 322 to 340 (LSKNLGSIPNSFYDSVPDP) lie on the Extracellular side of the membrane. The helical transmembrane segment at 341–361 (VFWPVFVIATLAAIVGSQAVI) threads the bilayer. Over 362-392 (TTTFSIIKQCHALGCFPRIKVVHTSKHIYGQ) the chain is Cytoplasmic. The helical transmembrane segment at 393-413 (IYIPEINWILMILTLAMAIGF) threads the bilayer. At 414–424 (RDTTLIGNAYG) the chain is on the extracellular side. The helical transmembrane segment at 425-445 (IACMVVMFITTFFMALVIVVV) threads the bilayer. Over 446 to 450 (WQKSC) the chain is Cytoplasmic. The helical transmembrane segment at 451–471 (FLAALFLGTLWIIEGVYLSAA) threads the bilayer. Residues 472–478 (LMKVTEG) are Extracellular-facing. A helical membrane pass occupies residues 479-499 (GWVPFVLTFIFMIAMYVWHYG). Topologically, residues 500–789 (TRRKYSFDLH…LIEVGMIYYV (290 aa)) are cytoplasmic.

Belongs to the HAK/KUP transporter (TC 2.A.72.3) family. In terms of tissue distribution, detected at very low levels in roots, stems, leaves and flowers of mature plants and strongly expressed in the roots of potassium-starved plants.

Its subcellular location is the cell membrane. In terms of biological role, high-affinity potassium transporter. This Arabidopsis thaliana (Mouse-ear cress) protein is Potassium transporter 4 (POT4).